The chain runs to 199 residues: Charged multivesicular body protein 1b (199 aa).

Coiled-coil stretches lie at residues 10 to 30 (NLKFAAKELQRNSKKCDKEEK) and 178 to 199 (TSVASAEQDELSQRLAKLRDQV). The segment at 167-199 (ELPQGQTGSVGTSVASAEQDELSQRLAKLRDQV) is disordered. Residues 170–182 (QGQTGSVGTSVAS) are compositionally biased toward polar residues. Residues 186–196 (DELSQRLAKLR) carry the MIT-interacting motif motif.

It belongs to the SNF7 family. Probable peripherally associated component of the endosomal sorting required for transport complex III (ESCRT-III).

It localises to the cytoplasm. The protein localises to the cytosol. The protein resides in the endosome. It is found in the late endosome membrane. Functionally, probable peripherally associated component of the endosomal sorting required for transport complex III (ESCRT-III) which is involved in multivesicular bodies (MVBs) formation and sorting of endosomal cargo proteins into MVBs. MVBs contain intraluminal vesicles (ILVs) that are generated by invagination and scission from the limiting membrane of the endosome and mostly are delivered to lysosomes enabling degradation of membrane proteins, such as stimulated growth factor receptors, lysosomal enzymes and lipids. The protein is Charged multivesicular body protein 1b (chmp1b) of Danio rerio (Zebrafish).